The primary structure comprises 174 residues: Gamma-crystallin C (174 aa).

Beta/gamma crystallin 'Greek key' domains lie at 2–40 and 41–83; these read GKIT…RVDS and GCWM…RLIP. Cys-23 carries the S-methylcysteine modification. Residues 84–87 form a connecting peptide region; that stretch reads HTGS. Beta/gamma crystallin 'Greek key' domains lie at 88-128 and 129-171; these read HRMR…HVLE and GCWV…RRVV.

Belongs to the beta/gamma-crystallin family.

Its function is as follows. Crystallins are the dominant structural components of the vertebrate eye lens. This Rattus norvegicus (Rat) protein is Gamma-crystallin C (Crygc).